Here is a 230-residue protein sequence, read N- to C-terminus: Orotidine 5'-phosphate decarboxylase (230 aa).

Substrate contacts are provided by residues D8, K32, 59–68, T118, R178, Q187, G207, and R208; that span reads DLKLYDIPNT. Residue K61 is the Proton donor of the active site.

It belongs to the OMP decarboxylase family. Type 1 subfamily. As to quaternary structure, homodimer.

The catalysed reaction is orotidine 5'-phosphate + H(+) = UMP + CO2. Its pathway is pyrimidine metabolism; UMP biosynthesis via de novo pathway; UMP from orotate: step 2/2. Functionally, catalyzes the decarboxylation of orotidine 5'-monophosphate (OMP) to uridine 5'-monophosphate (UMP). This is Orotidine 5'-phosphate decarboxylase from Nautilia profundicola (strain ATCC BAA-1463 / DSM 18972 / AmH).